The following is a 148-amino-acid chain: D-aminoacyl-tRNA deacylase (148 aa).

The Gly-cisPro motif, important for rejection of L-amino acids signature appears at 137 to 138 (GP).

This sequence belongs to the DTD family. As to quaternary structure, homodimer.

It is found in the cytoplasm. It catalyses the reaction glycyl-tRNA(Ala) + H2O = tRNA(Ala) + glycine + H(+). It carries out the reaction a D-aminoacyl-tRNA + H2O = a tRNA + a D-alpha-amino acid + H(+). In terms of biological role, an aminoacyl-tRNA editing enzyme that deacylates mischarged D-aminoacyl-tRNAs. Also deacylates mischarged glycyl-tRNA(Ala), protecting cells against glycine mischarging by AlaRS. Acts via tRNA-based rather than protein-based catalysis; rejects L-amino acids rather than detecting D-amino acids in the active site. By recycling D-aminoacyl-tRNA to D-amino acids and free tRNA molecules, this enzyme counteracts the toxicity associated with the formation of D-aminoacyl-tRNA entities in vivo and helps enforce protein L-homochirality. In Deinococcus geothermalis (strain DSM 11300 / CIP 105573 / AG-3a), this protein is D-aminoacyl-tRNA deacylase.